Reading from the N-terminus, the 205-residue chain is Protein-L-isoaspartate O-methyltransferase (205 aa).

S52 is an active-site residue.

This sequence belongs to the methyltransferase superfamily. L-isoaspartyl/D-aspartyl protein methyltransferase family.

It localises to the cytoplasm. It carries out the reaction [protein]-L-isoaspartate + S-adenosyl-L-methionine = [protein]-L-isoaspartate alpha-methyl ester + S-adenosyl-L-homocysteine. Functionally, catalyzes the methyl esterification of L-isoaspartyl residues in peptides and proteins that result from spontaneous decomposition of normal L-aspartyl and L-asparaginyl residues. It plays a role in the repair and/or degradation of damaged proteins. The polypeptide is Protein-L-isoaspartate O-methyltransferase (Gloeobacter violaceus (strain ATCC 29082 / PCC 7421)).